A 207-amino-acid polypeptide reads, in one-letter code: Urease accessory protein UreG (207 aa).

A GTP-binding site is contributed by 16 to 23 (GPVGSGKT).

Belongs to the SIMIBI class G3E GTPase family. UreG subfamily. Homodimer. UreD, UreF and UreG form a complex that acts as a GTP-hydrolysis-dependent molecular chaperone, activating the urease apoprotein by helping to assemble the nickel containing metallocenter of UreC. The UreE protein probably delivers the nickel.

The protein resides in the cytoplasm. Facilitates the functional incorporation of the urease nickel metallocenter. This process requires GTP hydrolysis, probably effectuated by UreG. This Shewanella halifaxensis (strain HAW-EB4) protein is Urease accessory protein UreG.